Here is a 7158-residue protein sequence, read N- to C-terminus: Twitchin (7158 aa).

Ig-like domains lie at 5 to 97 (PRFT…INLN) and 111 to 204 (PSFV…LALN). Cystine bridges form between Cys25–Cys81 and Cys132–Cys188. Disordered stretches follow at residues 204 to 381 (NFEE…PIVL), 473 to 639 (EEEL…TKLR), 658 to 732 (KKVK…DSMA), and 763 to 955 (EVKE…IDMR). A compositionally biased stretch (low complexity) spans 220 to 238 (TASPRPSSRGPGSRPSSPK). Composition is skewed to basic and acidic residues over residues 242-259 (KSRE…EGSP) and 279-291 (ESRR…KMEV). Composition is skewed to low complexity over residues 319 to 340 (SPST…RKGS) and 347 to 368 (SGTT…ASSD). The Ig-like 3 domain occupies 377–466 (PPIVLEASRS…GEGQSSAMVK (90 aa)). A compositionally biased stretch (basic residues) spans 504–513 (RVARRSKSKS). A compositionally biased stretch (low complexity) spans 514 to 523 (KSPAPQAKKS). Basic and acidic residues-rich tracts occupy residues 529–540 (GRQEASEVEHKR) and 601–618 (KTDS…DTLL). Residues 620–630 (KTTTSTKNESS) show a composition bias toward low complexity. The Kelch 1 repeat unit spans residues 718–764 (VKSGAGGLEKSDSMASLKKLDLKKGKIDDNSDGAFKVQLKKVVKKEV). 4 stretches are compositionally biased toward basic and acidic residues: residues 763-813 (EVKE…DKPK), 837-850 (KEVE…ELKA), 885-897 (KAHD…EGIK), and 917-955 (SESR…IDMR). The 93-residue stretch at 980 to 1072 (PKIVEVPENV…DSADVKLLVT (93 aa)) folds into the Ig-like 4 domain. Residues 1088–1118 (SQAGFQKDGEGGGAGGGGGEKKPMTEAERRQ) are disordered. The span at 1106-1118 (GEKKPMTEAERRQ) shows a compositional bias: basic and acidic residues. Ig-like domains lie at 1122–1213 (PGKK…AQLT), 1217–1306 (PPMK…SKVQ), and 1312–1398 (PRHT…AQLI). Cys1150 and Cys1201 are disulfide-bonded. Fibronectin type-III domains are found at residues 1598-1690 (PKGP…AKNP), 1696-1791 (KPKN…MKAK), 1891-1988 (PPKG…IKDP), 1994-2087 (KPGR…AKPK), 2189-2282 (PNGP…AKNP), 2288-2383 (KTGT…AKPR), 2483-2576 (PLGP…AKNP), and 2579-2675 (VPGK…AKPR). Residues 2014 to 2058 (PPHKDGGAPIEEYIVEVRDPDTKEWKEVKRVPDTNASISGLKEGK) form a Kelch 2 repeat. An Ig-like 8 domain is found at 2086-2181 (PKFIPAWLKH…GADEEKANLT (96 aa)). A Kelch 3 repeat occupies 2207–2253 (WKPPDDDGGEPIEYYEVEKLDTATGRWVPCAKVKDTKAHIDGLKKGQ). The span at 2266–2287 (GASDALSTDKDTKAKNPYDEPG) shows a compositional bias: basic and acidic residues. The segment at 2266–2295 (GASDALSTDKDTKAKNPYDEPGKTGTPDVV) is disordered. One copy of the Kelch 4 repeat lies at 2502–2547 (KVPEDDGGAPIDHYEIEKMDLATGRWVPCGRSETTKTTVPNLQPGH). The region spanning 2679–2763 (PRIHREDLSD…TNINGTDSVT (85 aa)) is the Ig-like 9 domain. 2 Fibronectin type-III domains span residues 2775-2868 (PKGP…AKNP) and 2874-2968 (RPGR…AKPR). Residues 2793 to 2839 (WKPPEDDGGEPIEFYEIEKMNTKDGIWVPCGRSGDTHFTVDSLNKGD) form a Kelch 5 repeat. Residues 2849–2901 (NSEGPSDPLETETDILAKNPFDRPDRPGRPEPTDWDSDHVDLKWDPPLSDGGA) are disordered. Positions 2868 to 2892 (PFDRPDRPGRPEPTDWDSDHVDLKW) are enriched in basic and acidic residues. In terms of domain architecture, Ig-like 10 spans 2972–3062 (PHIDRDALKN…GEDEATVKIN (91 aa)). Fibronectin type-III domains are found at residues 3070-3165 (PNGP…AKDP) and 3171-3265 (KTNA…AKAR). One copy of the Kelch 6 repeat lies at 3089-3134 (RAPDDDGGIPIENYVIEKYDTASGRWVPAAKVAGDKTTAVVDGLIP). An Ig-like 11 domain is found at 3268–3358 (PPVIDRNSIQ…GTDTAEVKVT (91 aa)). Fibronectin type-III domains are found at residues 3365-3459 (SPRG…AKDP) and 3465-3559 (KPGT…AKPR). One copy of the Kelch 7 repeat lies at 3384–3430 (WKEPEDDGGAEISHYVIEKQDAATGRWTACGESKDTNFHVDDLTQGH). In terms of domain architecture, Ig-like 12 spans 3563 to 3653 (PKINRDMFVA…GKDEHEVDVN (91 aa)). 6 Fibronectin type-III domains span residues 3661–3753 (PEGP…AKNP), 3759–3853 (APTD…AKPR), 3954–4047 (PEGP…AKNQ), 4053–4146 (PVDK…TKAR), 4246–4340 (PEGP…AKDP), and 4346–4440 (KPGR…TAKP). The Kelch 8 repeat unit spans residues 3972–4018 (WKPPTDNGGTDVLHYIVEKMDTSRGTWQEVGTFPDCTAKVNKLVPGK). 2 Kelch repeats span residues 4265–4310 (KPPK…LTEG) and 4365–4410 (DPPR…RVQK). Residues 4445–4531 (PKFDLDLDGK…GEAEANIKIT (87 aa)) enclose the Ig-like 13 domain. 8 consecutive Fibronectin type-III domains span residues 4538–4631 (APEN…IKDP), 4637–4733 (APST…CRPY), 4739–4834 (APDA…IEEQ), 4936–5028 (PTGP…AKNP), 5034–5129 (APGQ…ADNA), 5231–5326 (SPQH…VAKY), 5333–5427 (QPEA…LKSR), and 5430–5528 (PPGP…IQES). A Kelch 11 repeat occupies 4557–4602 (DAPKDDGGAEIAGYKIEYQEVGSQIWDKVPGLISGTAYTVRGLEHG). Residues 5287–5335 (LNYTVGGLIKDNRYRFRVRAETQYGVSEPCELADVVVAKYQFEVPNQPE) form a Kelch 12 repeat. An Ig-like 14 domain is found at 5533 to 5621 (PQIVVKPEDT…GSDTATANLV (89 aa)). 2 Fibronectin type-III domains span residues 5723 to 5817 (PQGP…ARLP) and 5823 to 5919 (SPLN…ASGS). One copy of the Kelch 13 repeat lies at 5742–5787 (RPPVTDGGSKITSYVVEKRDLSKDEWVTVTSNVKDMNYIVTGLFEN). 2 Ig-like domains span residues 5923–6011 (PKIV…ANLR) and 6016–6107 (PRVF…VNVT). Residues Cys5944 and Cys5995 are joined by a disulfide bond. One can recognise a Fibronectin type-III 31 domain in the interval 6114–6207 (PPRFPIIENI…PTAPVLIPGD (94 aa)). The 256-residue stretch at 6261–6516 (YDIHEELGTG…IHQALEHPWL (256 aa)) folds into the Protein kinase domain. ATP contacts are provided by residues 6267–6275 (LGTGAFGVV) and Lys6290. Asp6382 functions as the Proton acceptor in the catalytic mechanism. The interval 6517-6581 (TPGNAPGRDS…SIRDAFWDRS (65 aa)) is C-terminal regulatory domain (CDR). Ig-like domains follow at residues 6585-6673 (PRFI…VFLN), 6696-6795 (PRVE…CVLT), 6863-6952 (PSFT…ATLT), 6958-7059 (PLLN…ASLV), and 7067-7149 (PPVT…KAIA).

This sequence belongs to the protein kinase superfamily. CAMK Ser/Thr protein kinase family. As to quaternary structure, may interact (via protein kinase and CRD domains) with mak-1 (via protein kinase domain). Requires Mg(2+) as cofactor. Post-translationally, phosphorylated by mak-1 on the protein kinase domain and/or CDR domain in vitro. In terms of tissue distribution, expressed in body wall, anal, vulval, and pharyngeal muscles (at protein level).

It is found in the cytoplasm. The protein localises to the myofibril. The protein resides in the sarcomere. Its subcellular location is the a band. The enzyme catalyses L-seryl-[protein] + ATP = O-phospho-L-seryl-[protein] + ADP + H(+). It catalyses the reaction L-threonyl-[protein] + ATP = O-phospho-L-threonyl-[protein] + ADP + H(+). Its activity is regulated as follows. Forces generated by the contraction/relaxation cycles of muscle activity separate the regulatory domain from the catalytic core, activating the enzyme. At rest, the kinase domain is in a closed conformation. The active site is occupied by the autoinhibitory region (CDR), which makes extensive contact with the catalytic site, blocking substrate binding. At low forces the regulatory tail will unravel reversibly and expose the active site to its substrates, potentially stabilized by binding of Ca/CALM. At high forces the kinase begins to unfold and the integrity of the active site is disrupted. Its function is as follows. Regulator of muscle contraction and relaxation. Senses mechanical strain that occurs during muscle activity by unfolding in clearly resolvable steps at differing forces. Plays a role in the organization of sarcomeres in body wall muscles. This is Twitchin from Caenorhabditis elegans.